The following is a 553-amino-acid chain: Solute carrier family 22 member 12 (553 aa).

Residues 9-29 (LVGGLGRFQVLQTMALMVSIM) traverse the membrane as a helical segment. Residues Asn56 and Asn102 are each glycosylated (N-linked (GlcNAc...) asparagine). The next 11 helical transmembrane spans lie at 146–166 (PMAQSIYLAGILVGAAACGPA), 174–194 (LVLTWSYLQMAVMGTAAAFAP), 195–215 (AFPVYCLFRFLLAFAVAGVMM), 232–252 (LVMTLNSLGFSFGHGLTAAVA), 260–280 (LLQLVVSVPFFLCFLYSWWLA), 351–371 (CISTLCWFAFGFTFFGLALDL), 378–398 (IFLLQMFIGVVDIPAKMGALL), 407–427 (PTLAASLLLAGLCILANTLVP), 435–455 (SALAVLGLGGVGAAFTCITIY), 466–486 (MTAVGLGQMAARGGAILGPLV), and 495–515 (WLPLLVYGTVPVLSGLAALLL). Thr542 bears the Phosphothreonine mark.

Belongs to the major facilitator (TC 2.A.1) superfamily. Organic cation transporter (TC 2.A.1.19) family. In terms of assembly, interacts with PDZK1. N-glycosylated. In terms of tissue distribution, detected in kidney (at protein level). Detected in fetal and adult kidney. Detected in epithelial cells of proximal tubules in renal cortex.

It localises to the apical cell membrane. The enzyme catalyses urate(out) + (S)-lactate(in) = urate(in) + (S)-lactate(out). The catalysed reaction is nicotinate(in) + urate(out) = nicotinate(out) + urate(in). It catalyses the reaction urate(out) + n chloride(in) = urate(in) + n chloride(out). It carries out the reaction orotate(out) + nicotinate(in) = orotate(in) + nicotinate(out). Its function is as follows. Electroneutral antiporter that translocates urate across the apical membrane of proximal tubular cells in exchange for monovalent organic or inorganic anions. Involved in renal reabsorption of urate and helps maintaining blood levels of uric acid. Mediates urate uptake by an exchange with organic anions such as (S)-lactate and nicotinate, and inorganic anion Cl(-). Other inorganic anions such as Br(-), I(-) and NO3(-) may also act as counteranions that exchange for urate. Also mediates orotate tubular uptake coupled with nicotinate efflux and to a lesser extent with lactate efflux, therefore displaying a potential role in orotate renal reabsorption. Orotate transport is Cl(-)-dependent. The sequence is that of Solute carrier family 22 member 12 from Homo sapiens (Human).